Reading from the N-terminus, the 222-residue chain is Probable transaldolase (222 aa).

Lys91 (schiff-base intermediate with substrate) is an active-site residue.

The protein belongs to the transaldolase family. Type 3B subfamily.

It localises to the cytoplasm. It carries out the reaction D-sedoheptulose 7-phosphate + D-glyceraldehyde 3-phosphate = D-erythrose 4-phosphate + beta-D-fructose 6-phosphate. It participates in carbohydrate degradation; pentose phosphate pathway; D-glyceraldehyde 3-phosphate and beta-D-fructose 6-phosphate from D-ribose 5-phosphate and D-xylulose 5-phosphate (non-oxidative stage): step 2/3. In terms of biological role, transaldolase is important for the balance of metabolites in the pentose-phosphate pathway. The polypeptide is Probable transaldolase (Chlorobaculum tepidum (strain ATCC 49652 / DSM 12025 / NBRC 103806 / TLS) (Chlorobium tepidum)).